We begin with the raw amino-acid sequence, 452 residues long: Prephenate dehydrogenase [NADP(+)] (452 aa).

14 to 43 (KVIGIIGLGDMGLLYANKFTDAGWGVICCD) serves as a coordination point for NADP(+). The region spanning 14-297 (KVIGIIGLGD…GKHTGLLLLD (284 aa)) is the Prephenate/arogenate dehydrogenase domain.

This sequence belongs to the prephenate/arogenate dehydrogenase family.

It catalyses the reaction prephenate + NADP(+) = 3-(4-hydroxyphenyl)pyruvate + CO2 + NADPH. It functions in the pathway amino-acid biosynthesis; L-tyrosine biosynthesis; (4-hydroxyphenyl)pyruvate from prephenate (NADP(+) route): step 1/1. The protein is Prephenate dehydrogenase [NADP(+)] (TYR1) of Saccharomyces cerevisiae (strain ATCC 204508 / S288c) (Baker's yeast).